The following is a 426-amino-acid chain: 4-aminobutyrate aminotransferase GabT (426 aa).

Pyridoxal 5'-phosphate-binding positions include 111–112 (GS) and glutamine 242. N6-(pyridoxal phosphate)lysine is present on lysine 268. Threonine 297 contributes to the pyridoxal 5'-phosphate binding site.

It belongs to the class-III pyridoxal-phosphate-dependent aminotransferase family. As to quaternary structure, homotetramer. The cofactor is pyridoxal 5'-phosphate.

The enzyme catalyses 4-aminobutanoate + 2-oxoglutarate = succinate semialdehyde + L-glutamate. The catalysed reaction is 5-aminopentanoate + 2-oxoglutarate = 5-oxopentanoate + L-glutamate. The protein operates within amino-acid degradation; 4-aminobutanoate degradation. It functions in the pathway amino-acid degradation. Pyridoxal phosphate-dependent enzyme that catalyzes transamination between primary amines and alpha-keto acids. Catalyzes the transfer of the amino group from gamma-aminobutyrate (GABA) to alpha-ketoglutarate (KG) to yield succinic semialdehyde (SSA) and glutamate. Thereby functions in a GABA degradation pathway that allows some E.coli strains to utilize GABA as a nitrogen source for growth. Also catalyzes the conversion of 5-aminovalerate to glutarate semialdehyde, as part of a L-lysine degradation pathway that proceeds via cadaverine, glutarate and L-2-hydroxyglutarate. The chain is 4-aminobutyrate aminotransferase GabT (gabT) from Escherichia coli (strain K12).